Reading from the N-terminus, the 96-residue chain is Citrate lyase acyl carrier protein (96 aa).

S14 bears the O-(phosphoribosyl dephospho-coenzyme A)serine mark.

It belongs to the CitD family. Oligomer with a subunit composition of (alpha,beta,gamma)6.

Its subcellular location is the cytoplasm. Covalent carrier of the coenzyme of citrate lyase. This Pectobacterium atrosepticum (strain SCRI 1043 / ATCC BAA-672) (Erwinia carotovora subsp. atroseptica) protein is Citrate lyase acyl carrier protein.